Consider the following 193-residue polypeptide: NAD(P)H-quinone oxidoreductase subunit J (193 aa).

Residues 1–21 (MSDSAPTNPTPTNPAPEESAS) are disordered.

Belongs to the complex I 30 kDa subunit family. NDH-1 can be composed of about 15 different subunits; different subcomplexes with different compositions have been identified which probably have different functions.

The protein localises to the cellular thylakoid membrane. It catalyses the reaction a plastoquinone + NADH + (n+1) H(+)(in) = a plastoquinol + NAD(+) + n H(+)(out). It carries out the reaction a plastoquinone + NADPH + (n+1) H(+)(in) = a plastoquinol + NADP(+) + n H(+)(out). Its function is as follows. NDH-1 shuttles electrons from an unknown electron donor, via FMN and iron-sulfur (Fe-S) centers, to quinones in the respiratory and/or the photosynthetic chain. The immediate electron acceptor for the enzyme in this species is believed to be plastoquinone. Couples the redox reaction to proton translocation, and thus conserves the redox energy in a proton gradient. Cyanobacterial NDH-1 also plays a role in inorganic carbon-concentration. The protein is NAD(P)H-quinone oxidoreductase subunit J of Synechococcus sp. (strain CC9902).